The primary structure comprises 269 residues: Ribosomal RNA small subunit methyltransferase A (269 aa).

Positions 20, 22, 47, 68, 90, and 110 each coordinate S-adenosyl-L-methionine.

Belongs to the class I-like SAM-binding methyltransferase superfamily. rRNA adenine N(6)-methyltransferase family. RsmA subfamily.

Its subcellular location is the cytoplasm. It catalyses the reaction adenosine(1518)/adenosine(1519) in 16S rRNA + 4 S-adenosyl-L-methionine = N(6)-dimethyladenosine(1518)/N(6)-dimethyladenosine(1519) in 16S rRNA + 4 S-adenosyl-L-homocysteine + 4 H(+). Its function is as follows. Specifically dimethylates two adjacent adenosines (A1518 and A1519) in the loop of a conserved hairpin near the 3'-end of 16S rRNA in the 30S particle. May play a critical role in biogenesis of 30S subunits. This chain is Ribosomal RNA small subunit methyltransferase A, found in Chlorobium phaeobacteroides (strain DSM 266 / SMG 266 / 2430).